Reading from the N-terminus, the 463-residue chain is uncharacterized protein (463 aa).

This is an uncharacterized protein from Alkalihalophilus pseudofirmus (strain ATCC BAA-2126 / JCM 17055 / OF4) (Bacillus pseudofirmus).